The chain runs to 124 residues: Large ribosomal subunit protein bL12 (124 aa).

This sequence belongs to the bacterial ribosomal protein bL12 family. Homodimer. Part of the ribosomal stalk of the 50S ribosomal subunit. Forms a multimeric L10(L12)X complex, where L10 forms an elongated spine to which 2 to 4 L12 dimers bind in a sequential fashion. Binds GTP-bound translation factors.

Functionally, forms part of the ribosomal stalk which helps the ribosome interact with GTP-bound translation factors. Is thus essential for accurate translation. This chain is Large ribosomal subunit protein bL12, found in Bacteroides fragilis (strain ATCC 25285 / DSM 2151 / CCUG 4856 / JCM 11019 / LMG 10263 / NCTC 9343 / Onslow / VPI 2553 / EN-2).